A 417-amino-acid chain; its full sequence is Ribulose bisphosphate carboxylase large chain (417 aa).

Substrate-binding residues include N103 and T153. K155 serves as the catalytic Proton acceptor. Position 157 (K157) interacts with substrate. Positions 181, 183, and 184 each coordinate Mg(2+). K181 bears the N6-carboxylysine mark. H274 (proton acceptor) is an active-site residue. Positions 275, 307, and 359 each coordinate substrate.

This sequence belongs to the RuBisCO large chain family. Type I subfamily. In terms of assembly, heterohexadecamer of 8 large chains and 8 small chains. The cofactor is Mg(2+).

The protein resides in the plastid. It is found in the chloroplast. It catalyses the reaction 2 (2R)-3-phosphoglycerate + 2 H(+) = D-ribulose 1,5-bisphosphate + CO2 + H2O. It carries out the reaction D-ribulose 1,5-bisphosphate + O2 = 2-phosphoglycolate + (2R)-3-phosphoglycerate + 2 H(+). RuBisCO catalyzes two reactions: the carboxylation of D-ribulose 1,5-bisphosphate, the primary event in carbon dioxide fixation, as well as the oxidative fragmentation of the pentose substrate in the photorespiration process. Both reactions occur simultaneously and in competition at the same active site. The protein is Ribulose bisphosphate carboxylase large chain of Acrostichum aureum (Golden leather fern).